A 326-amino-acid polypeptide reads, in one-letter code: Serine hydrolase-like protein (326 aa).

One can recognise an AB hydrolase-1 domain in the interval 44–155 (PVLCLHGWAD…FLPTEVTDMF (112 aa)). The active site involves S118.

The protein belongs to the AB hydrolase superfamily.

Its function is as follows. Probable serine hydrolase. The polypeptide is Serine hydrolase-like protein (serhl) (Danio rerio (Zebrafish)).